Here is a 323-residue protein sequence, read N- to C-terminus: Flavone synthase cfoJ (323 aa).

FMN is required as a cofactor.

It functions in the pathway secondary metabolite biosynthesis; flavonoid biosynthesis. In terms of biological role, FMN-dependent oxidoreductase; part of the gene cluster that mediates the biosynthesis of chlorflavonin, a fungal flavonoid with acetolactate synthase inhibitory activity. Within the pathway, cfoJ acts as a flavone synthase (FNS) and catalyzes the formation of a double bond between C2 and C3, converting the flavanone into a flavone. The pathway begins with the PKS-NRPS hybrid synthetase cfoA that uses benzoic acid or p-hydroxybenzoic acid as a starter unit with four rounds of chain elongation using malonyl-CoA to form the chalcone skeleton. Then, a new type of chalcone isomerase, cfoK, catalyzes the conversion of the chalcone into a flavanone by a histidine-mediated oxa-Michael addition mechanism. The desaturation of flavanone to flavone is catalyzed by a new type of flavone synthase, the flavin mononucleotide (FMN)-dependent oxidoreductase cfoJ. Monooxygenases cfoF, cfoG, and P450 cfoH are responsible for the hydroxylation of the flavonoid skeleton at sites C3, C8, and C2', respectively. Like cfoF, the dehydratase cfoI plays also a role in the hydroxylation of position C3. Methyltransferases cfoB, cfoC, and cfoD then catalyze the methylation of C7-OH, C8-OH, and C3-OH, respectively. Finally, the monooxygenase cfoE is responsible for the chlorination of flavonoid at position C3'. The protein is Flavone synthase cfoJ of Aspergillus candidus.